The chain runs to 125 residues: Urotensin-2 (125 aa).

The first 20 residues, 1–20 (MYKLASCCLLFIGFLNPLFS), serve as a signal peptide directing secretion. Residues 21–111 (LPLLDSGEVS…HLLARIRKPY (91 aa)) constitute a propeptide that is removed on maturation. Cysteine 119 and cysteine 124 form a disulfide bridge.

This sequence belongs to the urotensin-2 family.

It localises to the secreted. Functionally, highly potent vasoconstrictor. The sequence is that of Urotensin-2 (UTS2) from Macaca mulatta (Rhesus macaque).